We begin with the raw amino-acid sequence, 146 residues long: FAD synthase (146 aa).

ATP contacts are provided by residues 9-10, 14-17, and D92; these read TF and HPGH.

It belongs to the archaeal FAD synthase family. As to quaternary structure, homodimer. A divalent metal cation serves as cofactor.

It catalyses the reaction FMN + ATP + H(+) = FAD + diphosphate. It functions in the pathway cofactor biosynthesis; FAD biosynthesis; FAD from FMN: step 1/1. Catalyzes the transfer of the AMP portion of ATP to flavin mononucleotide (FMN) to produce flavin adenine dinucleotide (FAD) coenzyme. The protein is FAD synthase of Halobacterium salinarum (strain ATCC 29341 / DSM 671 / R1).